Consider the following 167-residue polypeptide: Secreted LysM effector Blys6 (167 aa).

Positions 1–16 (MKGLCVAACTLVLAAA) are cleaved as a signal peptide. The 54-residue stretch at 109–162 (KWYRIRRGDDCGPVASEFGISADQLIEWNPWLSADVDGTHYPCMNIWPTDNLCV) folds into the LysM domain.

It belongs to the secreted LysM effector family.

Might have a role in sequestration of chitin oligosaccharides (breakdown products of fungal cell walls that are released during invasion and act as triggers of host immunity) to dampen host defense. The chain is Secreted LysM effector Blys6 from Beauveria bassiana (strain ARSEF 2860) (White muscardine disease fungus).